A 65-amino-acid chain; its full sequence is Large ribosomal subunit protein bL35 (65 aa).

It belongs to the bacterial ribosomal protein bL35 family.

The chain is Large ribosomal subunit protein bL35 from Aromatoleum aromaticum (strain DSM 19018 / LMG 30748 / EbN1) (Azoarcus sp. (strain EbN1)).